Here is a 405-residue protein sequence, read N- to C-terminus: Cytochrome b (405 aa).

A helical transmembrane segment spans residues 44–64 (FGSLAGIAMIIMIATGIFLAM). Residues His-94 and His-108 each coordinate heme b. 8 consecutive transmembrane segments (helical) span residues 97–117 (GASMFFIVVYVHMFRGLYYGS), 124–144 (VLWWLGLVILLLMMATAFMGY), 163–183 (FSAIPVVGDDIVTLLWGGFSV), 191–211 (FFSLHYLFPMLLFAVVFLHMW), 245–265 (FGLGIFLMVFCFFVFFAPNFF), 303–323 (LGGVLAMFGAILILFVLPWLD), 338–358 (GFFWVFLADCLLLGYLGAMPA), and 368–388 (LATIYYFLHFLVITPLVGWFE). Heme b is bound by residues His-195 and His-209.

The protein belongs to the cytochrome b family. The main subunits of complex b-c1 are: cytochrome b, cytochrome c1 and the Rieske protein. Heme b is required as a cofactor.

It is found in the cell membrane. Component of the ubiquinol-cytochrome c reductase complex (complex III or cytochrome b-c1 complex), which is a respiratory chain that generates an electrochemical potential coupled to ATP synthesis. In Rhodospirillum rubrum, this protein is Cytochrome b (petB).